Consider the following 1063-residue polypeptide: Endo-1,4-beta-xylanase 2 (1063 aa).

CBM-cenC domains are found at residues 5–146 (NIVM…GPAP), 183–313 (NIIK…LEGP), 348–482 (NHIF…IEGP), and 517–662 (NIVS…QGPS). Residues 711–1006 (SGATVKIRQT…NEAGKRFLEI (296 aa)) enclose the GH10 domain. Glutamate 840 (proton donor) is an active-site residue. Glutamate 941 functions as the Nucleophile in the catalytic mechanism.

Belongs to the glycosyl hydrolase 10 (cellulase F) family.

The enzyme catalyses Endohydrolysis of (1-&gt;4)-beta-D-xylosidic linkages in xylans.. It participates in glycan degradation; xylan degradation. Its function is as follows. Binds to and hydrolyzes insoluble and soluble xylan substrates. This chain is Endo-1,4-beta-xylanase 2, found in Arabidopsis thaliana (Mouse-ear cress).